A 240-amino-acid chain; its full sequence is GATA transcription factor 4 (240 aa).

Positions 104–124 are disordered; sequence ISFTGKPRSRRSRAPAPSVAG. The short motif at 109 to 116 is the Nuclear localization signal element; that stretch reads KPRSRRSR. The GATA-type zinc finger occupies 154–208; that stretch reads ADGARRCTHCASEKTPQWRTGPLGPKTLCNACGVRYKSGRLVPEYRPASSPTFVL.

This sequence belongs to the type IV zinc-finger family. Class A subfamily. In terms of tissue distribution, expressed in roots, flowers and leaves, and to a lower extent in stems.

The protein resides in the nucleus. Transcriptional activator that specifically binds 5'-GATA-3' or 5'-GAT-3' motifs within gene promoters. May be involved in the regulation of some light-responsive genes. In Arabidopsis thaliana (Mouse-ear cress), this protein is GATA transcription factor 4 (GATA4).